Here is a 316-residue protein sequence, read N- to C-terminus: MDILPHEKQIHEYIKTIEHLKKQSQDNPIFDVEIQKLEQKLDSLKQHVYSELTPWQRIMICRHPSRPHAVDFIRHLSESFVELAGDRSYREDHAIVGGLAKIGGIKCVVIGQEKGFDTESRVYRNFGMLNPEGFRKALRLMQMAEKFQLPIISLLDTPGAYPGLEAEERGQGWAIARNLREMMRINTPIIITIIGEGCSGGALGMGIGDVIGMLEHAYYSVISPEGCASILWKDASKNVEAASALKLNAEDLLNLKIIDSIIKEPLGGAHHDPHITYQNVKQFLVEQLHILRRIPSQILLEQRYLKFRQMGEFLEG.

The 255-residue stretch at 36-290 folds into the CoA carboxyltransferase C-terminal domain; the sequence is KLEQKLDSLK…KQFLVEQLHI (255 aa).

This sequence belongs to the AccA family. In terms of assembly, acetyl-CoA carboxylase is a heterohexamer composed of biotin carboxyl carrier protein (AccB), biotin carboxylase (AccC) and two subunits each of ACCase subunit alpha (AccA) and ACCase subunit beta (AccD).

The protein resides in the cytoplasm. The enzyme catalyses N(6)-carboxybiotinyl-L-lysyl-[protein] + acetyl-CoA = N(6)-biotinyl-L-lysyl-[protein] + malonyl-CoA. It functions in the pathway lipid metabolism; malonyl-CoA biosynthesis; malonyl-CoA from acetyl-CoA: step 1/1. Functionally, component of the acetyl coenzyme A carboxylase (ACC) complex. First, biotin carboxylase catalyzes the carboxylation of biotin on its carrier protein (BCCP) and then the CO(2) group is transferred by the carboxyltransferase to acetyl-CoA to form malonyl-CoA. This Protochlamydia amoebophila (strain UWE25) protein is Acetyl-coenzyme A carboxylase carboxyl transferase subunit alpha.